Reading from the N-terminus, the 546-residue chain is CTP synthase (546 aa).

The amidoligase domain stretch occupies residues 1–269 (MNSNTKIIFV…DAKLVELLNL (269 aa)). Serine 16 provides a ligand contact to CTP. Position 16 (serine 16) interacts with UTP. ATP-binding positions include 17 to 22 (SLGKGV) and aspartate 74. Residues aspartate 74 and glutamate 143 each coordinate Mg(2+). CTP contacts are provided by residues 150 to 152 (DIE), 190 to 195 (KTKPTQ), and lysine 226. Residues 190-195 (KTKPTQ) and lysine 226 each bind UTP. One can recognise a Glutamine amidotransferase type-1 domain in the interval 294–546 (TIAMVGKYVS…IQAAIENSNN (253 aa)). Glycine 356 lines the L-glutamine pocket. Catalysis depends on cysteine 383, which acts as the Nucleophile; for glutamine hydrolysis. Residues 384–387 (LGMQ), glutamate 407, and arginine 474 each bind L-glutamine. Residues histidine 519 and glutamate 521 contribute to the active site.

It belongs to the CTP synthase family. In terms of assembly, homotetramer.

The catalysed reaction is UTP + L-glutamine + ATP + H2O = CTP + L-glutamate + ADP + phosphate + 2 H(+). It carries out the reaction L-glutamine + H2O = L-glutamate + NH4(+). It catalyses the reaction UTP + NH4(+) + ATP = CTP + ADP + phosphate + 2 H(+). The protein operates within pyrimidine metabolism; CTP biosynthesis via de novo pathway; CTP from UDP: step 2/2. Allosterically activated by GTP, when glutamine is the substrate; GTP has no effect on the reaction when ammonia is the substrate. The allosteric effector GTP functions by stabilizing the protein conformation that binds the tetrahedral intermediate(s) formed during glutamine hydrolysis. Inhibited by the product CTP, via allosteric rather than competitive inhibition. Functionally, catalyzes the ATP-dependent amination of UTP to CTP with either L-glutamine or ammonia as the source of nitrogen. Regulates intracellular CTP levels through interactions with the four ribonucleotide triphosphates. The chain is CTP synthase from Francisella tularensis subsp. mediasiatica (strain FSC147).